We begin with the raw amino-acid sequence, 109 residues long: DNA-binding protein MJ0691 (109 aa).

Belongs to the PDCD5 family.

This is DNA-binding protein MJ0691 from Methanocaldococcus jannaschii (strain ATCC 43067 / DSM 2661 / JAL-1 / JCM 10045 / NBRC 100440) (Methanococcus jannaschii).